Here is a 149-residue protein sequence, read N- to C-terminus: Down syndrome critical region protein 9 (149 aa).

Residues 1 to 41 (MGRICPVNSRARRLRARPGRPSGDSLPYHQLQGGAPRLWSP) form a disordered region.

In terms of tissue distribution, testis specific.

In Homo sapiens (Human), this protein is Down syndrome critical region protein 9 (DSCR9).